The chain runs to 134 residues: Complexin-2 (134 aa).

The tract at residues 1–114 is disordered; it reads MDFVMKQALG…CGDEDEEDEE (114 aa). The segment covering 15 to 85 has biased composition (basic and acidic residues); sequence DMGKMLGGDE…EEKEAEEKAA (71 aa). The stretch at 29–84 forms a coiled coil; that stretch reads DAQKKEEERQEALRQQEDERKQKHIRMETEREKVRQQIRDKYGLKKKEEKEAEEKA.

Belongs to the complexin/synaphin family. Binds to the SNARE core complex containing SNAP25, VAMP2 and STX1A. In terms of tissue distribution, nervous system. Present in electric organ (at protein level).

The protein resides in the cytoplasm. It localises to the cytosol. Its subcellular location is the presynapse. The protein localises to the nucleus. It is found in the perikaryon. Functionally, positively regulates a late step in synaptic vesicle exocytosis. This is Complexin-2 from Narke japonica (Japanese sleeper ray).